The following is a 226-amino-acid chain: ATP-dependent dethiobiotin synthetase BioD (226 aa).

Residue 14-19 (GIGKTF) coordinates ATP. Thr-18 contacts Mg(2+). Lys-39 is a catalytic residue. Substrate is bound at residue Ser-43. ATP is bound by residues Asp-56, 117–120 (EGVG), 177–178 (NT), 206–208 (PHI), and Asn-213. Residues Asp-56 and Glu-117 each coordinate Mg(2+).

Belongs to the dethiobiotin synthetase family. Homodimer. Mg(2+) serves as cofactor.

Its subcellular location is the cytoplasm. The enzyme catalyses (7R,8S)-7,8-diammoniononanoate + CO2 + ATP = (4R,5S)-dethiobiotin + ADP + phosphate + 3 H(+). It functions in the pathway cofactor biosynthesis; biotin biosynthesis; biotin from 7,8-diaminononanoate: step 1/2. In terms of biological role, catalyzes a mechanistically unusual reaction, the ATP-dependent insertion of CO2 between the N7 and N8 nitrogen atoms of 7,8-diaminopelargonic acid (DAPA, also called 7,8-diammoniononanoate) to form a ureido ring. In Xylella fastidiosa (strain 9a5c), this protein is ATP-dependent dethiobiotin synthetase BioD.